We begin with the raw amino-acid sequence, 313 residues long: Ribosomal RNA small subunit methyltransferase H (313 aa).

S-adenosyl-L-methionine contacts are provided by residues 35 to 37 (GGH), Asp-55, Phe-80, Asp-102, and Gln-109.

The protein belongs to the methyltransferase superfamily. RsmH family.

It is found in the cytoplasm. The enzyme catalyses cytidine(1402) in 16S rRNA + S-adenosyl-L-methionine = N(4)-methylcytidine(1402) in 16S rRNA + S-adenosyl-L-homocysteine + H(+). Specifically methylates the N4 position of cytidine in position 1402 (C1402) of 16S rRNA. This is Ribosomal RNA small subunit methyltransferase H from Shewanella amazonensis (strain ATCC BAA-1098 / SB2B).